We begin with the raw amino-acid sequence, 702 residues long: Methionine--tRNA ligase (702 aa).

The 'HIGH' region motif lies at 14–24; the sequence is PYANGPVHLGH. Residues Cys-146, Cys-149, Cys-159, and Cys-162 each contribute to the Zn(2+) site. A 'KMSKS' region motif is present at residues 344–348; it reads KFSKS. Lys-347 contacts ATP. One can recognise a tRNA-binding domain in the interval 601–702; the sequence is EFLKVDLRVA…GKEINGKKIQ (102 aa).

Belongs to the class-I aminoacyl-tRNA synthetase family. MetG type 1 subfamily. Homodimer. Zn(2+) is required as a cofactor.

It is found in the cytoplasm. The enzyme catalyses tRNA(Met) + L-methionine + ATP = L-methionyl-tRNA(Met) + AMP + diphosphate. Is required not only for elongation of protein synthesis but also for the initiation of all mRNA translation through initiator tRNA(fMet) aminoacylation. This is Methionine--tRNA ligase from Chlorobium phaeobacteroides (strain DSM 266 / SMG 266 / 2430).